Reading from the N-terminus, the 203-residue chain is Mitotic spindle assembly checkpoint protein MAD2A (203 aa).

Residues Lys14 to Val196 form the HORMA domain. The required for assuming the closed conformation and for interaction with cdc20 stretch occupies residues Ser194 to Asp203.

It belongs to the MAD2 family. Interacts with cdc20.

It localises to the nucleus. The protein resides in the chromosome. The protein localises to the centromere. Its subcellular location is the kinetochore. It is found in the cytoplasm. In terms of biological role, component of the spindle-assembly checkpoint that prevents the onset of anaphase until all chromosomes are properly aligned at the metaphase plate. Required for the execution of the mitotic checkpoint which monitors the process of kinetochore-spindle attachment and inhibits the activity of the anaphase promoting complex until all chromosomes are aligned at the metaphase plate. The protein is Mitotic spindle assembly checkpoint protein MAD2A (mad2l1-1) of Dictyostelium discoideum (Social amoeba).